We begin with the raw amino-acid sequence, 353 residues long: Photosystem II protein D1 (353 aa).

Thr-2 bears the N-acetylthreonine mark. A Phosphothreonine modification is found at Thr-2. The next 3 membrane-spanning stretches (helical) occupy residues Tyr-29–Ser-46, His-118–Leu-133, and Trp-142–Ala-156. His-118 serves as a coordination point for chlorophyll a. Tyr-126 is a pheophytin a binding site. Residues Asp-170 and Glu-189 each coordinate [CaMn4O5] cluster. A helical transmembrane segment spans residues Phe-197 to Leu-218. His-198 serves as a coordination point for chlorophyll a. Residue His-215 coordinates a quinone. Residues His-215 and His-272 each coordinate Fe cation. The chain crosses the membrane as a helical span at residues Phe-274 to Leu-288. The [CaMn4O5] cluster site is built by His-332, Glu-333, Asp-342, and Ala-344. The propeptide occupies Ala-345–Gly-353.

Belongs to the reaction center PufL/M/PsbA/D family. In terms of assembly, PSII is composed of 1 copy each of membrane proteins PsbA, PsbB, PsbC, PsbD, PsbE, PsbF, PsbH, PsbI, PsbJ, PsbK, PsbL, PsbM, PsbT, PsbX, PsbY, PsbZ, Psb30/Ycf12, at least 3 peripheral proteins of the oxygen-evolving complex and a large number of cofactors. It forms dimeric complexes. The cofactor is The D1/D2 heterodimer binds P680, chlorophylls that are the primary electron donor of PSII, and subsequent electron acceptors. It shares a non-heme iron and each subunit binds pheophytin, quinone, additional chlorophylls, carotenoids and lipids. D1 provides most of the ligands for the Mn4-Ca-O5 cluster of the oxygen-evolving complex (OEC). There is also a Cl(-1) ion associated with D1 and D2, which is required for oxygen evolution. The PSII complex binds additional chlorophylls, carotenoids and specific lipids.. Post-translationally, tyr-161 forms a radical intermediate that is referred to as redox-active TyrZ, YZ or Y-Z. In terms of processing, C-terminally processed by CTPA; processing is essential to allow assembly of the oxygen-evolving complex and thus photosynthetic growth.

The protein localises to the plastid. It is found in the chloroplast thylakoid membrane. The enzyme catalyses 2 a plastoquinone + 4 hnu + 2 H2O = 2 a plastoquinol + O2. Functionally, photosystem II (PSII) is a light-driven water:plastoquinone oxidoreductase that uses light energy to abstract electrons from H(2)O, generating O(2) and a proton gradient subsequently used for ATP formation. It consists of a core antenna complex that captures photons, and an electron transfer chain that converts photonic excitation into a charge separation. The D1/D2 (PsbA/PsbD) reaction center heterodimer binds P680, the primary electron donor of PSII as well as several subsequent electron acceptors. The chain is Photosystem II protein D1 from Brassica napus (Rape).